A 103-amino-acid chain; its full sequence is UPF0145 protein HH_1800 (103 aa).

Belongs to the UPF0145 family.

The protein is UPF0145 protein HH_1800 of Helicobacter hepaticus (strain ATCC 51449 / 3B1).